The following is a 275-amino-acid chain: Beta-lactamase OXA-2 (275 aa).

An N-terminal signal peptide occupies residues 1-21; the sequence is MAIRIFAILFSIFSLATFAHA. Residue Ser-72 is the Acyl-ester intermediate of the active site. Lys-75 is modified (N6-carboxylysine). A substrate-binding site is contributed by 210-212; it reads KTG.

Belongs to the class-D beta-lactamase family.

The catalysed reaction is a beta-lactam + H2O = a substituted beta-amino acid. In terms of biological role, this is an oxacillin-hydrolyzing beta-lactamase. In Escherichia coli, this protein is Beta-lactamase OXA-2 (bla).